We begin with the raw amino-acid sequence, 160 residues long: MAETGYKQVVTPYNDDPFIGHLATPISASGFTKAFIGNLPAYRPGLAPILRGLEVGMAHGYFLGGPWVVLGPLRDSEYANIGGLIPALAMVLLATGCLASYGLVSFQGKAASNDPLKSAEGWSQFAAGFFIGGMGGAFVAYFLLENLGVVDGIMRGVFNQ.

2 consecutive transmembrane segments (helical) span residues 84 to 104 (LIPA…YGLV) and 125 to 145 (FAAG…FLLE).

It belongs to the PsaL family.

Its subcellular location is the cellular thylakoid membrane. This chain is Photosystem I reaction center subunit XI, found in Microcystis aeruginosa (strain NIES-843 / IAM M-2473).